The chain runs to 244 residues: Ribonuclease 3 2 (244 aa).

Residues 11 to 136 form the RNase III domain; that stretch reads LKALLRRLGL…LLGALYLSVG (126 aa). Residue Glu-50 participates in Mg(2+) binding. Asp-54 is an active-site residue. Residues Asp-122 and Glu-125 each coordinate Mg(2+). The active site involves Glu-125. Positions 164–234 constitute a DRBM domain; the sequence is NYKEALQAWT…AQQAYQDFIA (71 aa).

It belongs to the ribonuclease III family. As to quaternary structure, homodimer. It depends on Mg(2+) as a cofactor.

The protein resides in the cytoplasm. It carries out the reaction Endonucleolytic cleavage to 5'-phosphomonoester.. Its function is as follows. Digests double-stranded RNA. Involved in the processing of primary rRNA transcript to yield the immediate precursors to the large and small rRNAs (23S and 16S). Processes some mRNAs, and tRNAs when they are encoded in the rRNA operon. Processes pre-crRNA and tracrRNA of type II CRISPR loci if present in the organism. The sequence is that of Ribonuclease 3 2 from Synechocystis sp. (strain ATCC 27184 / PCC 6803 / Kazusa).